The chain runs to 106 residues: Large ribosomal subunit protein eL30 (106 aa).

Belongs to the eukaryotic ribosomal protein eL30 family. As to quaternary structure, component of the large ribosomal subunit. Mature ribosomes consist of a small (40S) and a large (60S) subunit. The 40S subunit contains about 32 different proteins and 1 molecule of RNA (18S). The 60S subunit contains 45 different proteins and 3 molecules of RNA (25S, 5.8S and 5S).

Its subcellular location is the cytoplasm. In terms of biological role, component of the ribosome, a large ribonucleoprotein complex responsible for the synthesis of proteins in the cell. The small ribosomal subunit (SSU) binds messenger RNAs (mRNAs) and translates the encoded message by selecting cognate aminoacyl-transfer RNA (tRNA) molecules. The large subunit (LSU) contains the ribosomal catalytic site termed the peptidyl transferase center (PTC), which catalyzes the formation of peptide bonds, thereby polymerizing the amino acids delivered by tRNAs into a polypeptide chain. The nascent polypeptides leave the ribosome through a tunnel in the LSU and interact with protein factors that function in enzymatic processing, targeting, and the membrane insertion of nascent chains at the exit of the ribosomal tunnel. In Candida albicans (strain SC5314 / ATCC MYA-2876) (Yeast), this protein is Large ribosomal subunit protein eL30.